Consider the following 171-residue polypeptide: Ribosome maturation factor RimM (171 aa).

The PRC barrel domain occupies 96–169 (EGEFFIADMI…KMIIDPIKGM (74 aa)).

The protein belongs to the RimM family. In terms of assembly, binds ribosomal protein uS19.

It localises to the cytoplasm. In terms of biological role, an accessory protein needed during the final step in the assembly of 30S ribosomal subunit, possibly for assembly of the head region. Essential for efficient processing of 16S rRNA. May be needed both before and after RbfA during the maturation of 16S rRNA. It has affinity for free ribosomal 30S subunits but not for 70S ribosomes. The polypeptide is Ribosome maturation factor RimM (Clostridioides difficile (strain 630) (Peptoclostridium difficile)).